The chain runs to 406 residues: Cysteine desulfurase (406 aa).

Lys226 carries the post-translational modification N6-(pyridoxal phosphate)lysine. Catalysis depends on Cys364, which acts as the Cysteine persulfide intermediate.

The protein belongs to the class-V pyridoxal-phosphate-dependent aminotransferase family. Csd subfamily. Homodimer. Interacts with SufE and the SufBCD complex composed of SufB, SufC and SufD. The interaction with SufE is required to mediate the direct transfer of the sulfur atom from the S-sulfanylcysteine. The cofactor is pyridoxal 5'-phosphate.

The protein resides in the cytoplasm. The catalysed reaction is (sulfur carrier)-H + L-cysteine = (sulfur carrier)-SH + L-alanine. It catalyses the reaction L-selenocysteine + AH2 = hydrogenselenide + L-alanine + A + H(+). Its pathway is cofactor biosynthesis; iron-sulfur cluster biosynthesis. Its function is as follows. Cysteine desulfurases mobilize the sulfur from L-cysteine to yield L-alanine, an essential step in sulfur metabolism for biosynthesis of a variety of sulfur-containing biomolecules. Component of the suf operon, which is activated and required under specific conditions such as oxidative stress and iron limitation. Acts as a potent selenocysteine lyase in vitro, that mobilizes selenium from L-selenocysteine. Selenocysteine lyase activity is however unsure in vivo. This Escherichia coli O139:H28 (strain E24377A / ETEC) protein is Cysteine desulfurase.